The sequence spans 95 residues: Cytochrome b (95 aa).

Transmembrane regions (helical) follow at residues 1–16, 40–61, and 76–95; these read GLCLASQLLTGLFLAM, WLIRNMHANGASFFFICIYLHI, and WNIGVVLLLLVMMTAFVGYV. Heme b is bound by residues His46 and His60.

Belongs to the cytochrome b family. The cytochrome bc1 complex contains 3 respiratory subunits (MT-CYB, CYC1 and UQCRFS1), 2 core proteins (UQCRC1 and UQCRC2) and probably 6 low-molecular weight proteins. Requires heme b as cofactor.

The protein resides in the mitochondrion inner membrane. Functionally, component of the ubiquinol-cytochrome c reductase complex (complex III or cytochrome b-c1 complex) that is part of the mitochondrial respiratory chain. The b-c1 complex mediates electron transfer from ubiquinol to cytochrome c. Contributes to the generation of a proton gradient across the mitochondrial membrane that is then used for ATP synthesis. This chain is Cytochrome b (mt-cyb), found in Gomphosus varius (Bird wrasse).